The following is a 350-amino-acid chain: Secreted effector protein PipB2 (350 aa).

Pentapeptide repeat domains lie at 162–201 (ANLT…NLSG), 202–241 (TSLG…SLLG), 247–286 (CNCS…IMED), and 287–326 (AVLT…TLTH).

Interacts with the host kinesin light chain (KLC), a subunit of the kinesin-1 motor complex.

The protein resides in the secreted. It localises to the host membrane. In terms of biological role, effector proteins function to alter host cell physiology and promote bacterial survival in host tissues. Involved in the reorganization of late endosome/lysosome (LE/Lys) compartments in mammalian cells. Necessary and sufficient to link kinesin-1 onto the Salmonella-containing vacuole (SCV) membrane. Required for centrifugal extension of lysosomal glycoprotein-rich membrane tubules, known as Salmonella-induced filaments (Sifs), away from the SCV and toward the cell periphery. Required for virulence, but not for intracellular survival and replication in phagocytic cells. This is Secreted effector protein PipB2 (pipB2) from Salmonella choleraesuis (strain SC-B67).